A 193-amino-acid polypeptide reads, in one-letter code: ER membrane protein complex subunit 4 (193 aa).

The next 2 membrane-spanning stretches (helical) occupy residues 91 to 111 and 137 to 157; these read ILAY…TLML and LWPA…IGVY.

The protein belongs to the EMC4 family.

The protein resides in the endoplasmic reticulum membrane. The sequence is that of ER membrane protein complex subunit 4 from Schizosaccharomyces pombe (strain 972 / ATCC 24843) (Fission yeast).